A 331-amino-acid chain; its full sequence is Ferredoxin--NADP reductase 2 (331 aa).

Residues glutamate 37, glutamine 45, tyrosine 50, valine 90, phenylalanine 124, aspartate 286, and threonine 327 each coordinate FAD.

Belongs to the ferredoxin--NADP reductase type 2 family. In terms of assembly, homodimer. FAD serves as cofactor.

It catalyses the reaction 2 reduced [2Fe-2S]-[ferredoxin] + NADP(+) + H(+) = 2 oxidized [2Fe-2S]-[ferredoxin] + NADPH. This Listeria monocytogenes serovar 1/2a (strain ATCC BAA-679 / EGD-e) protein is Ferredoxin--NADP reductase 2.